Here is a 190-residue protein sequence, read N- to C-terminus: NADH-quinone oxidoreductase subunit B (190 aa).

Residues cysteine 39, cysteine 40, cysteine 104, and cysteine 135 each contribute to the [4Fe-4S] cluster site.

Belongs to the complex I 20 kDa subunit family. In terms of assembly, NDH-1 is composed of 14 different subunits. Subunits NuoB, C, D, E, F, and G constitute the peripheral sector of the complex. The cofactor is [4Fe-4S] cluster.

It is found in the cell inner membrane. It catalyses the reaction a quinone + NADH + 5 H(+)(in) = a quinol + NAD(+) + 4 H(+)(out). Its function is as follows. NDH-1 shuttles electrons from NADH, via FMN and iron-sulfur (Fe-S) centers, to quinones in the respiratory chain. The immediate electron acceptor for the enzyme in this species is believed to be a menaquinone. Couples the redox reaction to proton translocation (for every two electrons transferred, four hydrogen ions are translocated across the cytoplasmic membrane), and thus conserves the redox energy in a proton gradient. The protein is NADH-quinone oxidoreductase subunit B of Chlorobium phaeobacteroides (strain BS1).